Consider the following 211-residue polypeptide: Probable nicotinate-nucleotide adenylyltransferase (211 aa).

The protein belongs to the NadD family.

It carries out the reaction nicotinate beta-D-ribonucleotide + ATP + H(+) = deamido-NAD(+) + diphosphate. It functions in the pathway cofactor biosynthesis; NAD(+) biosynthesis; deamido-NAD(+) from nicotinate D-ribonucleotide: step 1/1. Catalyzes the reversible adenylation of nicotinate mononucleotide (NaMN) to nicotinic acid adenine dinucleotide (NaAD). The protein is Probable nicotinate-nucleotide adenylyltransferase of Lactiplantibacillus plantarum (strain ATCC BAA-793 / NCIMB 8826 / WCFS1) (Lactobacillus plantarum).